The primary structure comprises 429 residues: Glutamyl-tRNA reductase (429 aa).

Residues 50–53 (TCNR), Ser-110, 115–117 (ETQ), and Gln-121 each bind substrate. The Nucleophile role is filled by Cys-51. 190–195 (GAGEMA) contributes to the NADP(+) binding site.

Belongs to the glutamyl-tRNA reductase family. Homodimer.

The enzyme catalyses (S)-4-amino-5-oxopentanoate + tRNA(Glu) + NADP(+) = L-glutamyl-tRNA(Glu) + NADPH + H(+). It functions in the pathway porphyrin-containing compound metabolism; protoporphyrin-IX biosynthesis; 5-aminolevulinate from L-glutamyl-tRNA(Glu): step 1/2. In terms of biological role, catalyzes the NADPH-dependent reduction of glutamyl-tRNA(Glu) to glutamate 1-semialdehyde (GSA). The polypeptide is Glutamyl-tRNA reductase (Campylobacter hominis (strain ATCC BAA-381 / DSM 21671 / CCUG 45161 / LMG 19568 / NCTC 13146 / CH001A)).